The following is a 402-amino-acid chain: MSRVSQARNLGKYFLLIDNMLVVLGFFVVFPLISIRFVDQMGWAAVMVGIALGLRQFIQQGLGIFGGAIADRFGAKPMIVTGMLMRAAGFATMGIAHEPWLLWFSCFLSGLGGTLFDPPRSALVVKLIRPEQRGRFFSLLMMQDSAGAVIGALLGSWLLQYDFRLVCATGAILFILCALFNAWLLPAWKLSTVRTPVREGMRRVMSDKRFVTYVLTLAGYYMLAVQVMLMLPIMVNDIAGSPAAVKWMYAIEACLSLTLLYPIARWSEKRFRLEHRLMAGLLVMSLSMIPIGMVGNLQQLFTLICAFYIGSVIAEPARETLSASLADARARGSYMGFSRLGLAIGGAIGYIGGGWLFDMGKALTQPELPWMMLGIIGFITFLALGWQFSHKRTPRRMLEPGA.

The Cytoplasmic segment spans residues Met1–Lys12. The chain crosses the membrane as a helical span at residues Tyr13 to Ile33. Over Ser34–Glu98 the chain is Periplasmic. Residues Pro99–Phe116 form a helical membrane-spanning segment. Residues Asp117 to Ser138 are Cytoplasmic-facing. Residues Leu139–Leu159 traverse the membrane as a helical segment. Topologically, residues Gln160–Arg164 are periplasmic. A helical membrane pass occupies residues Leu165–Leu185. Residues Pro186 to Tyr213 lie on the Cytoplasmic side of the membrane. A helical membrane pass occupies residues Val214–Met234. The Periplasmic portion of the chain corresponds to Val235–Ala243. The helical transmembrane segment at Ala244–Ala264 threads the bilayer. At Arg265 to Arg276 the chain is on the cytoplasmic side. A helical membrane pass occupies residues Leu277–Leu297. Topologically, residues Gln298–Gln299 are periplasmic. A helical transmembrane segment spans residues Leu300–Thr320. Topologically, residues Leu321–Arg339 are cytoplasmic. The chain crosses the membrane as a helical span at residues Leu340–Gly360. Topologically, residues Lys361–Glu367 are periplasmic. A helical membrane pass occupies residues Leu368–Phe388. Topologically, residues Ser389–Ala402 are cytoplasmic.

It belongs to the major facilitator superfamily. DHA1 family. MdtH (TC 2.A.1.2.21) subfamily.

The protein localises to the cell inner membrane. The protein is Multidrug resistance protein MdtH of Salmonella paratyphi B (strain ATCC BAA-1250 / SPB7).